The sequence spans 181 residues: NADH-quinone oxidoreductase subunit I (181 aa).

4Fe-4S ferredoxin-type domains lie at 44-74 (LNRY…VEGA) and 90-119 (RVYQ…MTND). Residues Cys54, Cys57, Cys60, Cys64, Cys99, Cys102, Cys105, and Cys109 each contribute to the [4Fe-4S] cluster site.

Belongs to the complex I 23 kDa subunit family. NDH-1 is composed of 14 different subunits. Subunits NuoA, H, J, K, L, M, N constitute the membrane sector of the complex. It depends on [4Fe-4S] cluster as a cofactor.

Its subcellular location is the cell membrane. The catalysed reaction is a quinone + NADH + 5 H(+)(in) = a quinol + NAD(+) + 4 H(+)(out). NDH-1 shuttles electrons from NADH, via FMN and iron-sulfur (Fe-S) centers, to quinones in the respiratory chain. The immediate electron acceptor for the enzyme in this species is believed to be menaquinone. Couples the redox reaction to proton translocation (for every two electrons transferred, four hydrogen ions are translocated across the cytoplasmic membrane), and thus conserves the redox energy in a proton gradient. This Mycobacterium marinum (strain ATCC BAA-535 / M) protein is NADH-quinone oxidoreductase subunit I.